We begin with the raw amino-acid sequence, 520 residues long: CUGBP Elav-like family member 4 (520 aa).

RRM domains follow at residues 47–128 (IKLF…PADS), 135–215 (RKLF…FADT), and 435–513 (CNLF…LKRP).

This sequence belongs to the CELF/BRUNOL family.

Its subcellular location is the nucleus. It is found in the cytoplasm. Its function is as follows. RNA-binding protein that may be implicated in the regulation of pre-mRNA alternative splicing. In Danio rerio (Zebrafish), this protein is CUGBP Elav-like family member 4 (celf4).